The following is a 222-amino-acid chain: Sigma non-opioid intracellular receptor 1 (222 aa).

Over Met1 to Thr6 the chain is Lumenal. A helical membrane pass occupies residues Ile7 to Ala29. Residues Asn30 to Leu222 are Cytoplasmic-facing. An important for ligand-binding region spans residues Ser97–Leu104. A C-terminal hydrophobic region region spans residues Phe175–Leu222.

The protein belongs to the ERG2 family. Homotrimer.

Its subcellular location is the nucleus inner membrane. The protein resides in the nucleus outer membrane. It is found in the nucleus envelope. The protein localises to the cytoplasmic vesicle. It localises to the endoplasmic reticulum membrane. Its subcellular location is the membrane. In terms of biological role, may function in lipid transport from the endoplasmic reticulum and be involved in a wide array of cellular functions probably through regulation of the biogenesis of lipid microdomains at the plasma membrane. May regulate calcium efflux at the endoplasmic reticulum. The polypeptide is Sigma non-opioid intracellular receptor 1 (sigmar1) (Danio rerio (Zebrafish)).